A 71-amino-acid chain; its full sequence is MAFLKKSLFLVLFLGLVSLSICEEEKREEENEEVQEDDDQSEEKRGFLDVIKHVGKAALGVVTHLINQGEQ.

The first 22 residues, 1-22, serve as a signal peptide directing secretion; that stretch reads MAFLKKSLFLVLFLGLVSLSIC. Positions 23-43 are excised as a propeptide; sequence EEEKREEENEEVQEDDDQSEE. Residue Gln68 is modified to Glutamine amide. Residues 70–71 constitute a propeptide that is removed on maturation; it reads EQ.

Expressed by the skin glands.

It localises to the secreted. Its function is as follows. Has antimicrobial activity against Gram-negative bacterium E.coli (MIC=26.35 uM), against Gram-positive bacterium S.aureus (MIC=6.59 uM) and against fungus C.albicans (MIC=13.18 uM). At higher concentrations also has a bactericidal and fungicidal effect. Has hemagglutinating activity against horse erythrocytes. In Cruziohyla calcarifer (Splendid leaf frog), this protein is Cruzioseptin-2.